Reading from the N-terminus, the 100-residue chain is MHLTPREKDKLLIAMAAQVARRRLERGVKLNHPEAIALITDFVVEGARDGRSVAELMRDGGTVLTREQVMEGVPEMIHDVQVEATFPDGTKLVTVHNPIR.

Belongs to the urease gamma subunit family. Heterotrimer of UreA (gamma), UreB (beta) and UreC (alpha) subunits. Three heterotrimers associate to form the active enzyme.

It is found in the cytoplasm. It carries out the reaction urea + 2 H2O + H(+) = hydrogencarbonate + 2 NH4(+). Its pathway is nitrogen metabolism; urea degradation; CO(2) and NH(3) from urea (urease route): step 1/1. This chain is Urease subunit gamma, found in Granulibacter bethesdensis (strain ATCC BAA-1260 / CGDNIH1).